Consider the following 1203-residue polypeptide: Serine/threonine-protein kinase Nek1 (1203 aa).

In terms of domain architecture, Protein kinase spans 4 to 258; that stretch reads YVRLQKIGEG…VNSILEKGFI (255 aa). ATP contacts are provided by residues 10–18 and Lys-33; that span reads IGEGSFGKA. Asp-128 acts as the Proton acceptor in catalysis. Thr-156 carries the post-translational modification Phosphothreonine. Thr-162 carries the post-translational modification Phosphothreonine; by autocatalysis. The interval 329–357 is disordered; the sequence is LLEKKPPPKHKQAHQIPVKKMNSGEERKK. Residues Ser-417 and Ser-437 each carry the phosphoserine modification. At Thr-615 the chain carries Phosphothreonine. Ser-618 carries the post-translational modification Phosphoserine. 2 disordered regions span residues 643-662 and 674-708; these read LTDT…SSKR and AQED…ISSD. Residues 674–683 show a composition bias toward basic and acidic residues; that stretch reads AQEDEKEKQH. 4 positions are modified to phosphoserine: Ser-750, Ser-786, Ser-820, and Ser-832. Disordered stretches follow at residues 814 to 866 and 888 to 925; these read PSAT…LPPV and AVQQ…GCDV. Residues 839–850 are compositionally biased toward acidic residues; sequence NVEEPDDLETEV. A Phosphoserine modification is found at Ser-997. 2 disordered regions span residues 1021–1045 and 1063–1120; these read SLEI…TVFE and REQP…ETTS. Ser-1071 carries the post-translational modification Phosphoserine.

It belongs to the protein kinase superfamily. NEK Ser/Thr protein kinase family. NIMA subfamily. As to quaternary structure, binds to CBY2. Found in a complex with CFAP410, NEK1 and SPATA7. Interacts with CFAP410. Interacts (via Ser-997 phosphorylated form) with 14-3-3 proteins. Requires Mg(2+) as cofactor. In terms of tissue distribution, predominantly in testes (germ cells and Sertoli cells). Lower levels in ovary (oocytes and granulosa cells), thymus and lung.

It localises to the nucleus. Its subcellular location is the cytoplasm. It is found in the cytoskeleton. The protein localises to the microtubule organizing center. The protein resides in the centrosome. It catalyses the reaction L-seryl-[protein] + ATP = O-phospho-L-seryl-[protein] + ADP + H(+). The enzyme catalyses L-threonyl-[protein] + ATP = O-phospho-L-threonyl-[protein] + ADP + H(+). Phosphorylates serines and threonines, but also appears to possess tyrosine kinase activity. Involved in DNA damage checkpoint control and for proper DNA damage repair. In response to injury that includes DNA damage, NEK1 phosphorylates VDAC1 to limit mitochondrial cell death. May be implicated in the control of meiosis. Involved in cilium assembly. In Mus musculus (Mouse), this protein is Serine/threonine-protein kinase Nek1 (Nek1).